A 411-amino-acid chain; its full sequence is Anaerobic sulfatase-maturating enzyme homolog AslB (411 aa).

Residues 3-250 (QQVPTRAFHV…LVAIFDHWIK (248 aa)) form the Radical SAM core domain. Cys-21 and Cys-25 together coordinate [4Fe-4S] cluster. Tyr-27 lines the S-adenosyl-L-methionine pocket. Cys-28 contacts [4Fe-4S] cluster. Gly-74, Ser-129, and Arg-141 together coordinate S-adenosyl-L-methionine. 3 residues coordinate [4Fe-4S] cluster: Cys-276, Cys-282, and Cys-297. Asp-298 serves as the catalytic Proton acceptor. Cys-339, Cys-342, Cys-348, Cys-352, and Cys-371 together coordinate [4Fe-4S] cluster.

Belongs to the radical SAM superfamily. Anaerobic sulfatase-maturating enzyme family. [4Fe-4S] cluster is required as a cofactor.

The polypeptide is Anaerobic sulfatase-maturating enzyme homolog AslB (aslB) (Escherichia coli (strain K12)).